Reading from the N-terminus, the 253-residue chain is Porin thermoregulatory protein EnvY (253 aa).

The region spanning 149 to 246 (DSVCRIIQSD…GLTPLNYLAK (98 aa)) is the HTH araC/xylS-type domain. 2 consecutive DNA-binding regions (H-T-H motif) follow at residues 166–187 (RIVASSLCLSPSLLKKKLKNEN) and 213–236 (ITQVAQLCGYSSTSYFISVFKAFY).

In terms of biological role, influences the temperature-dependent expression of several E.coli envelope proteins, most notably the porins OmpF and OmpC and the lambda receptor, LamB. The chain is Porin thermoregulatory protein EnvY (envY) from Escherichia coli (strain K12).